The primary structure comprises 188 residues: Xanthine phosphoribosyltransferase (188 aa).

Positions 20 and 27 each coordinate xanthine. Residue 127-131 (ANGNA) coordinates 5-phospho-alpha-D-ribose 1-diphosphate. Lys-155 serves as a coordination point for xanthine.

The protein belongs to the purine/pyrimidine phosphoribosyltransferase family. Xpt subfamily. Homodimer.

Its subcellular location is the cytoplasm. The catalysed reaction is XMP + diphosphate = xanthine + 5-phospho-alpha-D-ribose 1-diphosphate. The protein operates within purine metabolism; XMP biosynthesis via salvage pathway; XMP from xanthine: step 1/1. Its function is as follows. Converts the preformed base xanthine, a product of nucleic acid breakdown, to xanthosine 5'-monophosphate (XMP), so it can be reused for RNA or DNA synthesis. The protein is Xanthine phosphoribosyltransferase of Phocaeicola vulgatus (strain ATCC 8482 / DSM 1447 / JCM 5826 / CCUG 4940 / NBRC 14291 / NCTC 11154) (Bacteroides vulgatus).